A 419-amino-acid polypeptide reads, in one-letter code: Cytosine permease (419 aa).

Residues 1–19 (MSQDNNFSQGPVPQSARKG) lie on the Cytoplasmic side of the membrane. A helical transmembrane segment spans residues 20-39 (VLALTFVMLGLTFFSASMWT). The Periplasmic segment spans residues 40–51 (GGTLGTGLSYHD). Residues 52–71 (FFLAVLIGNLLLGIYTSFLG) form a helical membrane-spanning segment. The Cytoplasmic portion of the chain corresponds to 72–100 (YIGAKTGLTTHLLARFSFGVKGSWLPSLL). A helical transmembrane segment spans residues 101 to 120 (LGGTQVGWFGVGVAMFAIPV). Residues 121-127 (GKATGLD) lie on the Periplasmic side of the membrane. Residues 128–147 (INLLIAVSGLLMTVTVFFGI) form a helical membrane-spanning segment. Residues 148-152 (SALTV) lie on the Cytoplasmic side of the membrane. Residues 153–172 (LSVIAVPAIACLGGYSVWLA) form a helical membrane-spanning segment. Residues 173 to 192 (VNGMGGLDALKAVVPAQPLD) lie on the Periplasmic side of the membrane. Residues 193-212 (FNVALALVVGSFISAGTLTA) traverse the membrane as a helical segment. Residues 213 to 221 (DFVRFGRNA) lie on the Cytoplasmic side of the membrane. Residues 222 to 242 (KLAVLVAMVAFFLGNSLMFIF) traverse the membrane as a helical segment. At 243-257 (GAAGAAALGMADISD) the chain is on the periplasmic side. Residues 258 to 277 (VMIAQGLLLPAIVVLGLNIW) form a helical membrane-spanning segment. Residues 278–300 (TTNDNALYASGLGFANITGMSSK) are Cytoplasmic-facing. The helical transmembrane segment at 301 to 320 (TLSVINGIIGTVCALWLYNN) threads the bilayer. F321 is a topological domain (periplasmic). The chain crosses the membrane as a helical span at residues 322–341 (VGWLTFLSAAIPPVGGVIIA). Residues 342-358 (DYLMNRRRYEHFATTRM) are Cytoplasmic-facing. The chain crosses the membrane as a helical span at residues 359–378 (MSVNWVAILAVALGIAAGHW). The Periplasmic portion of the chain corresponds to 379–380 (LP). A helical membrane pass occupies residues 381-400 (GIVPVNAVLGGALSYLILNP). Residues 401–419 (ILNRKTTAAMTHVEANSVE) lie on the Cytoplasmic side of the membrane.

It belongs to the purine-cytosine permease (2.A.39) family.

It localises to the cell inner membrane. Its function is as follows. Required for cytosine transport into the cell. This chain is Cytosine permease (codB), found in Escherichia coli O6:H1 (strain CFT073 / ATCC 700928 / UPEC).